The chain runs to 268 residues: Glutamate racemase (268 aa).

Substrate contacts are provided by residues 10–11 and 42–43; these read DS and YG. The active-site Proton donor/acceptor is cysteine 73. 74–75 is a substrate binding site; that stretch reads NT. Residue cysteine 184 is the Proton donor/acceptor of the active site. Position 185-186 (185-186) interacts with substrate; sequence TH.

The protein belongs to the aspartate/glutamate racemases family.

It carries out the reaction L-glutamate = D-glutamate. It functions in the pathway cell wall biogenesis; peptidoglycan biosynthesis. Provides the (R)-glutamate required for cell wall biosynthesis. This is Glutamate racemase from Carnobacterium sp. (strain St2).